We begin with the raw amino-acid sequence, 460 residues long: Acetyl-CoA decarbonylase/synthase complex subunit beta (460 aa).

Positions 188, 191, 277, and 279 each coordinate [Ni-Fe-S] cluster. A compositionally biased stretch (acidic residues) spans 402-416 (EETEPEEEEVEEAYP). A disordered region spans residues 402–422 (EETEPEEEEVEEAYPEETPIP).

Belongs to the CdhC family. In terms of assembly, monomer. The ACDS complex is made up of alpha, epsilon, beta, gamma and delta chains with a probable stoichiometry of (alpha(2)epsilon(2))(4)-beta(8)-(gamma(1)delta(1))(8). Requires [Ni-Fe-S] cluster as cofactor.

It catalyses the reaction Co(I)-[corrinoid Fe-S protein] + acetyl-CoA + H(+) = methyl-Co(III)-[corrinoid Fe-S protein] + CO + CoA. Functionally, part of a complex that catalyzes the reversible cleavage of acetyl-CoA, allowing autotrophic growth from CO(2). The alpha-epsilon complex generates CO from CO(2), while the beta subunit (this protein) combines the CO with CoA and a methyl group to form acetyl-CoA. The methyl group, which is incorporated into acetyl-CoA, is transferred to the beta subunit by a corrinoid iron-sulfur protein (the gamma-delta complex). This chain is Acetyl-CoA decarbonylase/synthase complex subunit beta, found in Methanothermobacter thermautotrophicus (strain ATCC 29096 / DSM 1053 / JCM 10044 / NBRC 100330 / Delta H) (Methanobacterium thermoautotrophicum).